The following is a 182-amino-acid chain: MTFEQLIPLIIMAFALGMDAFSVSLGMGMMALKIRQILYIGVTIGIFHIIMPFIGMVLGRFLSEQYGDIAHFAGAILLIGLGFYIVYSSILENEETRTAPIGISLFVFAFGVSIDSFSVGLSLGIYGAQTIITILLFGFVSMLLAWIGLLIGRHAKGMLGTYGEIVGGIILVGFGLYLLFPI.

6 helical membrane passes run 6–26, 37–57, 71–91, 101–121, 131–151, and 162–182; these read LIPL…VSLG, ILYI…IGMV, HFAG…SSIL, IGIS…SVGL, IITI…GLLI, and YGEI…LFPI.

Belongs to the MntP (TC 9.B.29) family.

The protein localises to the cell membrane. Probably functions as a manganese efflux pump. The polypeptide is Putative manganese efflux pump MntP (Bacillus anthracis (strain A0248)).